The primary structure comprises 81 residues: Costars family protein ABRACL (81 aa).

Residue Met1 is modified to N-acetylmethionine.

The protein belongs to the costars family.

The polypeptide is Costars family protein ABRACL (Abracl) (Mus musculus (Mouse)).